A 478-amino-acid chain; its full sequence is Transcript termination protein A18 (478 aa).

Residues 98–254 (KVELKRPMYV…NDVINVSNSS (157 aa)) enclose the Helicase ATP-binding domain. Residue 111–118 (LACGFGKT) participates in ATP binding. Residues 204 to 207 (DESH) carry the DESH box motif. In terms of domain architecture, Helicase C-terminal spans 307–454 (ILDTIIYDFE…IITLAIEKLG (148 aa)).

This sequence belongs to the helicase family. Poxviruses subfamily. As to quaternary structure, interacts with G2. Might be part of a transcription complex composed at least of G2, A18, and H5.

It is found in the virion. In terms of biological role, DNA helicase which seems to act as a postreplicative transcription termination factor. Involved in ATP-dependent release of nascent RNA. Forms a stable complex with single-stranded DNA, and to a lesser extent RNA. In Erythrocebus patas (Red guenon), this protein is Transcript termination protein A18.